Reading from the N-terminus, the 311-residue chain is N-acetyl-gamma-glutamyl-phosphate reductase (311 aa).

Residue cysteine 117 is part of the active site.

It belongs to the NAGSA dehydrogenase family. Type 2 subfamily.

The protein resides in the cytoplasm. The catalysed reaction is N-acetyl-L-glutamate 5-semialdehyde + phosphate + NADP(+) = N-acetyl-L-glutamyl 5-phosphate + NADPH + H(+). The protein operates within amino-acid biosynthesis; L-arginine biosynthesis; N(2)-acetyl-L-ornithine from L-glutamate: step 3/4. Catalyzes the NADPH-dependent reduction of N-acetyl-5-glutamyl phosphate to yield N-acetyl-L-glutamate 5-semialdehyde. The chain is N-acetyl-gamma-glutamyl-phosphate reductase from Brucella anthropi (strain ATCC 49188 / DSM 6882 / CCUG 24695 / JCM 21032 / LMG 3331 / NBRC 15819 / NCTC 12168 / Alc 37) (Ochrobactrum anthropi).